A 119-amino-acid chain; its full sequence is Anamorsin homolog (119 aa).

The segment covering 1-15 has biased composition (polar residues); sequence MSSSATSTQAFSLKT. Disordered stretches follow at residues 1-21 and 33-119; these read MSSSATSTQAFSLKTRQPIPD and LKQA…TDDV. [2Fe-2S] cluster is bound by residues C42, C49, C52, and C54. The segment at 42–54 is fe-S binding site A; sequence CTTRRRACKNCVC. Positions 81, 84, 92, and 95 each coordinate [4Fe-4S] cluster. Short sequence motifs (cx2C motif) lie at residues 81 to 84 and 92 to 95; these read CGNC and CANC. The interval 81–95 is fe-S binding site B; that stretch reads CGNCSKGDAFRCANC.

This sequence belongs to the anamorsin family. As to quaternary structure, monomer. It depends on [2Fe-2S] cluster as a cofactor. The cofactor is [4Fe-4S] cluster.

It is found in the cytoplasm. The protein localises to the mitochondrion intermembrane space. In terms of biological role, component of the cytosolic iron-sulfur (Fe-S) protein assembly (CIA) machinery. Required for the maturation of extramitochondrial Fe-S proteins. Part of an electron transfer chain functioning in an early step of cytosolic Fe-S biogenesis, facilitating the de novo assembly of a [4Fe-4S] cluster on the cytosolic Fe-S scaffold complex. Electrons are transferred from NADPH via a FAD- and FMN-containing diflavin oxidoreductase. Together with the diflavin oxidoreductase, also required for the assembly of the diferric tyrosyl radical cofactor of ribonucleotide reductase (RNR), probably by providing electrons for reduction during radical cofactor maturation in the catalytic small subunit. The protein is Anamorsin homolog of Leishmania infantum.